The primary structure comprises 571 residues: Kelch-like protein 28 (571 aa).

The 68-residue stretch at 35–102 (CDIILRVGDV…AYTGTVFISQ (68 aa)) folds into the BTB domain. Kelch repeat units follow at residues 284–331 (VLCA…VLDQ), 332–386 (KVYV…VLAG), 387–433 (ELYA…VLDG), 435–479 (IYAI…VMLG), 480–526 (FIFV…VIDN), and 528–570 (LYVV…GLTA).

This chain is Kelch-like protein 28 (KLHL28), found in Homo sapiens (Human).